The sequence spans 1132 residues: Phosphatidylinositide phosphatase SAC2 (1132 aa).

The SAC domain occupies 167–518 (LKMFMDSESF…GDSISRQYAG (352 aa)). Residues 250-269 (ESSDDDKSSPETPPQDSTCV) are disordered. The hSac2 domain occupies 593-760 (RSHQELISQL…KSSKPHEDII (168 aa)). Residues S714, S827, and S830 each carry the phosphoserine modification. Residues 833–872 (TMENPGVMGNKVQGESDGDISSDNDSYHSDEFLTNSKSEE) form a disordered region. A compositionally biased stretch (basic and acidic residues) spans 857 to 872 (DSYHSDEFLTNSKSEE). 4 positions are modified to phosphoserine: S879, S882, S908, and S911. 2 stretches are compositionally biased toward polar residues: residues 908–918 (SASSIDVSTHA) and 994–1005 (RVSNEETQSEPM). 2 disordered regions span residues 908-951 (SASS…HTRT) and 981-1016 (VAQKSEEGSHKTNRVSNEETQSEPMGQTPPRPSQLN). Position 1103 is a phosphoserine (S1103).

In terms of assembly, homodimer. Interacts with OCRL and RAB5. Interacts with INPP5B and INPP4A. Interacts with STAT3; the interaction is independent of STAT3 'Tyr-705' phosphorylation status. In terms of tissue distribution, highly expressed in brain and hypothalamus, expressed in lung and pancreas, and detected at low levels in liver and heart (at protein level).

It is found in the membrane. The protein resides in the clathrin-coated pit. It localises to the early endosome. The protein localises to the recycling endosome. It catalyses the reaction a myo-inositol phosphate + H2O = myo-inositol + phosphate. Its function is as follows. Inositol 4-phosphatase which mainly acts on phosphatidylinositol 4-phosphate. May be functionally linked to OCRL, which converts phosphatidylinositol 4,5-bisphosphate to phosphatidylinositol, for a sequential dephosphorylation of phosphatidylinositol 4,5-bisphosphate at the 5 and 4 position of inositol, thus playing an important role in the endocytic recycling. Regulator of TF:TFRC and integrins recycling pathway, is also involved in cell migration mechanisms. Modulates AKT/GSK3B pathway by decreasing AKT and GSK3B phosphorylation. Negatively regulates STAT3 signaling pathway through inhibition of STAT3 phosphorylation and translocation to the nucleus. Functionally important modulator of cardiac myocyte size and of the cardiac response to stress. May play a role as negative regulator of axon regeneration after central nervous system injuries. This Mus musculus (Mouse) protein is Phosphatidylinositide phosphatase SAC2.